The primary structure comprises 506 residues: Cysteine--tRNA ligase (506 aa).

C34 provides a ligand contact to Zn(2+). Positions P36–N46 match the 'HIGH' region motif. Positions 230, 269, and 273 each coordinate Zn(2+). The 'KMSKS' region signature appears at K302 to S306. K305 is an ATP binding site.

The protein belongs to the class-I aminoacyl-tRNA synthetase family. Monomer. Zn(2+) is required as a cofactor.

The protein localises to the cytoplasm. The catalysed reaction is tRNA(Cys) + L-cysteine + ATP = L-cysteinyl-tRNA(Cys) + AMP + diphosphate. The polypeptide is Cysteine--tRNA ligase (Brucella abortus (strain S19)).